The following is a 483-amino-acid chain: Pentatricopeptide repeat-containing protein At5g18950 (483 aa).

PPR repeat units follow at residues 144–178 (EPTL…GISS), 179–213 (SVVT…EFDS), 218–246 (CLIR…GLDP), 247–281 (GQYV…NHFP), 282–316 (SMYI…GYAP), 317–351 (DRVV…GMRP), 352–386 (NEFA…GYGG), 387–421 (TMLS…GVTP), and 422–456 (NAIT…GLKP).

It belongs to the PPR family. P subfamily.

The protein is Pentatricopeptide repeat-containing protein At5g18950 of Arabidopsis thaliana (Mouse-ear cress).